Here is a 223-residue protein sequence, read N- to C-terminus: Pleckstrin homology domain-containing family B member 1 (223 aa).

The region spanning 2-109 is the PH domain; the sequence is ALVRGGWLWR…WKTALMEANS (108 aa).

In terms of assembly, homodimer. Interacts (via PH domain) with MYO1C. Interacts (via PH domain) with MYO7A. Binds transducins. Highly expressed in photoreceptor cells, oligodendrocytes and throughout the myelinated parts of the central nervous system. Detected in brain, liver, kidney, spleen and trachea.

It is found in the membrane. Its subcellular location is the cytoplasm. The chain is Pleckstrin homology domain-containing family B member 1 (Plekhb1) from Rattus norvegicus (Rat).